The following is a 247-amino-acid chain: 23S rRNA (guanosine-2'-O-)-methyltransferase RlmB (247 aa).

Residues Gly197, Ile217, and Leu226 each contribute to the S-adenosyl-L-methionine site.

This sequence belongs to the class IV-like SAM-binding methyltransferase superfamily. RNA methyltransferase TrmH family. RlmB subfamily.

The protein resides in the cytoplasm. It carries out the reaction guanosine(2251) in 23S rRNA + S-adenosyl-L-methionine = 2'-O-methylguanosine(2251) in 23S rRNA + S-adenosyl-L-homocysteine + H(+). Its function is as follows. Specifically methylates the ribose of guanosine 2251 in 23S rRNA. This Vibrio parahaemolyticus serotype O3:K6 (strain RIMD 2210633) protein is 23S rRNA (guanosine-2'-O-)-methyltransferase RlmB.